Reading from the N-terminus, the 339-residue chain is Photosystem II assembly lipoprotein Ycf48 (339 aa).

The N-terminal stretch at 1–22 (MVIVKSWQKIFTLLVVLLLCIG) is a signal peptide. A lipid anchor (N-palmitoyl cysteine) is attached at cysteine 23. Cysteine 23 is lipidated: S-diacylglycerol cysteine.

Belongs to the Ycf48 family. Part of early PSII assembly complexes which includes D1 (psbA) and PsbI; not found in mature PSII. Binds to the lumenal side of PSII complexes. Interacts with YidC.

The protein localises to the cellular thylakoid membrane. In terms of biological role, a factor required for optimal assembly of photosystem II (PSII), acting in the early stages of PSII assembly. Also plays a role in replacement of photodamaged D1 (psbA). Assists YidC in synthesis of chlorophyll-binding proteins. The sequence is that of Photosystem II assembly lipoprotein Ycf48 from Nostoc sp. (strain PCC 7120 / SAG 25.82 / UTEX 2576).